Reading from the N-terminus, the 487-residue chain is Glutamate--tRNA ligase (487 aa).

The short motif at 13–23 is the 'HIGH' region element; it reads PSPTGLFHIGG. The 'KMSKS' region motif lies at 255–259; it reads KLSKR. Lys258 provides a ligand contact to ATP.

It belongs to the class-I aminoacyl-tRNA synthetase family. Glutamate--tRNA ligase type 1 subfamily. Monomer.

Its subcellular location is the cytoplasm. The enzyme catalyses tRNA(Glu) + L-glutamate + ATP = L-glutamyl-tRNA(Glu) + AMP + diphosphate. In terms of biological role, catalyzes the attachment of glutamate to tRNA(Glu) in a two-step reaction: glutamate is first activated by ATP to form Glu-AMP and then transferred to the acceptor end of tRNA(Glu). In Malacoplasma penetrans (strain HF-2) (Mycoplasma penetrans), this protein is Glutamate--tRNA ligase.